We begin with the raw amino-acid sequence, 69 residues long: Large ribosomal subunit protein bL31 (69 aa).

The protein belongs to the bacterial ribosomal protein bL31 family. Type A subfamily. As to quaternary structure, part of the 50S ribosomal subunit.

Its function is as follows. Binds the 23S rRNA. This chain is Large ribosomal subunit protein bL31, found in Mycoplasmopsis pulmonis (strain UAB CTIP) (Mycoplasma pulmonis).